The following is a 262-amino-acid chain: Acyl-[acyl-carrier-protein]--UDP-N-acetylglucosamine O-acyltransferase (262 aa).

This sequence belongs to the transferase hexapeptide repeat family. LpxA subfamily. As to quaternary structure, homotrimer.

It is found in the cytoplasm. It carries out the reaction a (3R)-hydroxyacyl-[ACP] + UDP-N-acetyl-alpha-D-glucosamine = a UDP-3-O-[(3R)-3-hydroxyacyl]-N-acetyl-alpha-D-glucosamine + holo-[ACP]. The protein operates within glycolipid biosynthesis; lipid IV(A) biosynthesis; lipid IV(A) from (3R)-3-hydroxytetradecanoyl-[acyl-carrier-protein] and UDP-N-acetyl-alpha-D-glucosamine: step 1/6. Involved in the biosynthesis of lipid A, a phosphorylated glycolipid that anchors the lipopolysaccharide to the outer membrane of the cell. The sequence is that of Acyl-[acyl-carrier-protein]--UDP-N-acetylglucosamine O-acyltransferase from Vibrio parahaemolyticus serotype O3:K6 (strain RIMD 2210633).